A 257-amino-acid chain; its full sequence is Flagellar brake protein YcgR 1 (257 aa).

Over residues 1 to 18 (MDTTQSNGQTDTQGQLHA) the composition is skewed to polar residues. The segment at 1-30 (MDTTQSNGQTDTQGQLHAQTAEGGNDFGRR) is disordered. One can recognise a PilZ domain in the interval 133–246 (QRREYFRVDA…AENTLQRLIT (114 aa)).

This sequence belongs to the YcgR family. As to quaternary structure, monomer. Interacts with the flagellar basal bodies.

It is found in the bacterial flagellum basal body. Its function is as follows. Acts as a flagellar brake, regulating swimming and swarming in a bis-(3'-5') cyclic diguanylic acid (c-di-GMP)-dependent manner. Binds 1 c-di-GMP dimer per subunit. Increasing levels of c-di-GMP lead to decreased motility. This chain is Flagellar brake protein YcgR 1, found in Paraburkholderia phytofirmans (strain DSM 17436 / LMG 22146 / PsJN) (Burkholderia phytofirmans).